The primary structure comprises 198 residues: ATP synthase subunit b (198 aa).

Residues 25 to 45 (PLSELLIGTLAFGLLVAFFFW) form a helical membrane-spanning segment.

Belongs to the ATPase B chain family. F-type ATPases have 2 components, F(1) - the catalytic core - and F(0) - the membrane proton channel. F(1) has five subunits: alpha(3), beta(3), gamma(1), delta(1), epsilon(1). F(0) has three main subunits: a(1), b(2) and c(10-14). The alpha and beta chains form an alternating ring which encloses part of the gamma chain. F(1) is attached to F(0) by a central stalk formed by the gamma and epsilon chains, while a peripheral stalk is formed by the delta and b chains.

The protein localises to the cell membrane. Functionally, f(1)F(0) ATP synthase produces ATP from ADP in the presence of a proton or sodium gradient. F-type ATPases consist of two structural domains, F(1) containing the extramembraneous catalytic core and F(0) containing the membrane proton channel, linked together by a central stalk and a peripheral stalk. During catalysis, ATP synthesis in the catalytic domain of F(1) is coupled via a rotary mechanism of the central stalk subunits to proton translocation. In terms of biological role, component of the F(0) channel, it forms part of the peripheral stalk, linking F(1) to F(0). This chain is ATP synthase subunit b, found in Frankia alni (strain DSM 45986 / CECT 9034 / ACN14a).